Reading from the N-terminus, the 499-residue chain is Maturase K (499 aa).

Belongs to the intron maturase 2 family. MatK subfamily.

The protein localises to the plastid. It localises to the chloroplast. Functionally, usually encoded in the trnK tRNA gene intron. Probably assists in splicing its own and other chloroplast group II introns. This chain is Maturase K, found in Batis maritima (Maritime saltwort).